Here is a 239-residue protein sequence, read N- to C-terminus: Thymidylate kinase (239 aa).

ATP is bound at residue 10 to 17 (GVNRVGKS).

This sequence belongs to the thymidylate kinase family.

The enzyme catalyses dTMP + ATP = dTDP + ADP. The protein operates within pyrimidine metabolism; dTTP biosynthesis. In terms of biological role, catalyzes the conversion of dTMP to dTDP. The protein is Thymidylate kinase (TMK) of African swine fever virus (isolate Tick/South Africa/Pretoriuskop Pr4/1996) (ASFV).